A 658-amino-acid chain; its full sequence is tRNA 5-methylaminomethyl-2-thiouridine biosynthesis bifunctional protein MnmC (658 aa).

The interval 1 to 236 (MIPELPHAQL…KWEVLRGEFL (236 aa)) is tRNA (mnm(5)s(2)U34)-methyltransferase. The interval 265-658 (IGGGLAGCAS…ALRRLIRGKA (394 aa)) is FAD-dependent cmnm(5)s(2)U34 oxidoreductase.

It in the N-terminal section; belongs to the methyltransferase superfamily. tRNA (mnm(5)s(2)U34)-methyltransferase family. This sequence in the C-terminal section; belongs to the DAO family. FAD serves as cofactor.

Its subcellular location is the cytoplasm. It carries out the reaction 5-aminomethyl-2-thiouridine(34) in tRNA + S-adenosyl-L-methionine = 5-methylaminomethyl-2-thiouridine(34) in tRNA + S-adenosyl-L-homocysteine + H(+). Catalyzes the last two steps in the biosynthesis of 5-methylaminomethyl-2-thiouridine (mnm(5)s(2)U) at the wobble position (U34) in tRNA. Catalyzes the FAD-dependent demodification of cmnm(5)s(2)U34 to nm(5)s(2)U34, followed by the transfer of a methyl group from S-adenosyl-L-methionine to nm(5)s(2)U34, to form mnm(5)s(2)U34. The protein is tRNA 5-methylaminomethyl-2-thiouridine biosynthesis bifunctional protein MnmC of Pseudomonas fluorescens (strain ATCC BAA-477 / NRRL B-23932 / Pf-5).